A 309-amino-acid polypeptide reads, in one-letter code: Probable (S)-ureidoglycine aminohydrolase (309 aa).

Positions 1–22 are cleaved as a signal peptide; that stretch reads MMLPRLLLLVVASALPLASVAA. Glutamate 245, histidine 247, histidine 251, and glutamine 285 together coordinate Mn(2+). Glutamate 245 serves as a coordination point for substrate. Substrate contacts are provided by glutamine 285, tyrosine 297, and lysine 301.

Belongs to the UGHY family. In terms of assembly, homooctamer. Requires Mn(2+) as cofactor.

It localises to the endoplasmic reticulum. The enzyme catalyses (S)-2-ureidoglycine + H2O = (S)-ureidoglycolate + NH4(+). In terms of biological role, involved in the catabolism of purine nucleotides. The sequential activity of AAH, UGLYAH and UAH allows a complete purine breakdown without the intermediate generation of urea. The protein is Probable (S)-ureidoglycine aminohydrolase (UGLYAH) of Oryza sativa subsp. japonica (Rice).